The chain runs to 37 residues: Bactericidin B-3 (37 aa).

Glycine 37 is modified (glycine amide).

It belongs to the cecropin family.

It is found in the secreted. In terms of biological role, cecropins have lytic and antibacterial activity against several Gram-positive and Gram-negative bacteria. This is Bactericidin B-3 from Manduca sexta (Tobacco hawkmoth).